Here is a 412-residue protein sequence, read N- to C-terminus: Polyferredoxin protein MvhB (412 aa).

12 consecutive 4Fe-4S ferredoxin-type domains span residues 2-29, 30-57, 66-95, 96-127, 138-166, 168-197, 207-236, 237-265, 275-304, 311-344, 356-385, and 386-412; these read IVIN…VKPE, DVIY…HEDI, KKIT…LVND, GKAS…IEGV, DKPI…LPKY, ESIE…ISGK, ENFT…PKSD, LTVS…LEVK, EGIV…VVSP, GLKK…LVEV, NRIQ…LTDD, and EKLP…LLIK. Positions 9, 12, 15, and 19 each coordinate [4Fe-4S] cluster. Positions 75, 78, 81, 85, 107, 110, 113, 117, 146, 149, 152, 156, 177, 180, 183, 187, 216, 219, 222, 226, 245, 248, 251, 255, 284, 287, 290, 294, 324, 327, 330, 334, 365, 368, 371, and 375 each coordinate [4Fe-4S] cluster.

[4Fe-4S] cluster is required as a cofactor.

The polypeptide is Polyferredoxin protein MvhB (mvhB) (Methanothermus fervidus).